The primary structure comprises 369 residues: Cytochrome P450 monooxygenase apf8 (369 aa).

Cys-303 contributes to the heme binding site.

Belongs to the cytochrome P450 family. Requires heme as cofactor.

It functions in the pathway secondary metabolite biosynthesis. In terms of biological role, cytochrome P450 monooxygenase; part of the gene cluster that mediates the biosynthesis of the cyclic tetrapeptide apicidin F (APF). The non-ribosomal peptide synthetase apf1 incorporates four different amino acids to produce apicidin F: L-phenylalanine, D-pipecolic acid (D-pip), N-methoxy-L-tryptophan and L-2-aminooctanedioic acid. L-Phenylalanine is the only proteinogenic amino acid directly used by apf1. The 3 other apf1 substrates are non-proteinogenic and have to be modified by other enzymes of the cluster. Lysine is converted to delta-1-pyrroline-5-carboxylate (P5C) which is reduced to L-pipecolic acid (L-pip) by apf3. L-pip is epimerized to D-pip, probably by apf1 activity, prior to incorporation. L-Tryptophan is N-oxidyzed by one of the cytochrome P450 monooxygenases (apf7 or apf8), and further methylated at the hydroxy group by the O-methyltransferase apf6 to yield N-methoxy-L-tryptophan. The synthesis of the fourth apf1 substrate is more complex. The fatty acid synthase apf5 is involved in the synthesis of the octanoic acid backbone of L-2-aminooctanedioic acid by fixing one acetyl-CoA unit and three malonyl-CoA units. Then one of the cytochrome P450 monooxygenases (apf7 or apf8) may oxidize this backbone to 2-oxooctanoic acid. The aminotransferase apf4 is predicted to catalyze the exchange of the keto group with an amino group. The next step would be the oxidation of 2-aminooctanoic acid by one of the cytochrome P450 monooxygenases (apf7 or apf8). The last step is the oxidation of 2-amino-8-hydroxyoctanoic acid to 2-aminooctanedioic acid is catalyzed by the FAD-dependent monooxygenase apf9. The polypeptide is Cytochrome P450 monooxygenase apf8 (Gibberella fujikuroi (strain CBS 195.34 / IMI 58289 / NRRL A-6831) (Bakanae and foot rot disease fungus)).